The primary structure comprises 61 residues: Large ribosomal subunit protein eL37 (61 aa).

The Zn(2+) site is built by C19, C22, C34, and C37. The C4-type zinc-finger motif lies at 19–37 (CRRCGRNSFNARKGYCAAC).

It belongs to the eukaryotic ribosomal protein eL37 family. Zn(2+) is required as a cofactor.

In terms of biological role, binds to the 23S rRNA. The sequence is that of Large ribosomal subunit protein eL37 from Sulfolobus acidocaldarius (strain ATCC 33909 / DSM 639 / JCM 8929 / NBRC 15157 / NCIMB 11770).